The following is a 237-amino-acid chain: ATP synthase subunit 4, mitochondrial (237 aa).

The transit peptide at 1 to 30 directs the protein to the mitochondrion; sequence MFRALTLKASARPVVAGLCSRQAPIAAVRY.

Belongs to the eukaryotic ATPase B chain family.

The protein localises to the mitochondrion. The protein resides in the mitochondrion inner membrane. In terms of biological role, mitochondrial membrane ATP synthase (F(1)F(0) ATP synthase or Complex V) produces ATP from ADP in the presence of a proton gradient across the membrane which is generated by electron transport complexes of the respiratory chain. F-type ATPases consist of two structural domains, F(1) - containing the extramembraneous catalytic core, and F(0) - containing the membrane proton channel, linked together by a central stalk and a peripheral stalk. During catalysis, ATP synthesis in the catalytic domain of F(1) is coupled via a rotary mechanism of the central stalk subunits to proton translocation. Part of the complex F(0) domain and the peripheric stalk, which acts as a stator to hold the catalytic alpha(3)beta(3) subcomplex and subunit a/ATP6 static relative to the rotary elements. The sequence is that of ATP synthase subunit 4, mitochondrial (ATP4) from Kluyveromyces lactis (strain ATCC 8585 / CBS 2359 / DSM 70799 / NBRC 1267 / NRRL Y-1140 / WM37) (Yeast).